The chain runs to 347 residues: Probable E3 ubiquitin-protein ligase DTX3 (347 aa).

Residues 111 to 157 are disordered; sequence GGEHPELHRPGPPPLRAAPLLPPGARGLPPPPPPLPPPLPPRLREDA. Pro residues predominate over residues 120–151; that stretch reads PGPPPLRAAPLLPPGARGLPPPPPPLPPPLPP. The segment at 164 to 205 adopts an RING-type zinc-finger fold; sequence CPICLGEIQNAKTLEKCRHSFCEGCITRALQVKKACPMCGRF.

It belongs to the Deltex family. Homodimer. May form a heterodimer with other members of the Deltex family. Interacts with NOTCH1. In terms of tissue distribution, strongly expressed in testis and brain. Weakly expressed in kidney.

It localises to the cytoplasm. It catalyses the reaction S-ubiquitinyl-[E2 ubiquitin-conjugating enzyme]-L-cysteine + [acceptor protein]-L-lysine = [E2 ubiquitin-conjugating enzyme]-L-cysteine + N(6)-ubiquitinyl-[acceptor protein]-L-lysine.. Its pathway is protein modification; protein ubiquitination. Regulator of Notch signaling, a signaling pathway involved in cell-cell communications that regulates a broad spectrum of cell-fate determinations. Probably acts both as a positive and negative regulator of Notch, depending on the developmental and cell context. Functions as a ubiquitin ligase protein in vitro, suggesting that it may regulate the Notch pathway via some ubiquitin ligase activity. This is Probable E3 ubiquitin-protein ligase DTX3 (Dtx3) from Mus musculus (Mouse).